We begin with the raw amino-acid sequence, 217 residues long: uncharacterized protein (217 aa).

This is an uncharacterized protein from Acidianus sp. F28 (AFV-2).